A 440-amino-acid polypeptide reads, in one-letter code: Gap junction gamma-2 protein (440 aa).

Residues 1–21 (MTNMSWSFLTRLLEEIHNHST) lie on the Cytoplasmic side of the membrane. Residues 22–42 (FVGKVWLTVLVVFRIVLTAVG) traverse the membrane as a helical segment. Topologically, residues 43-78 (GESIYSDEQSKFTCNTRQPGCDNVCYDAFAPLSHVR) are extracellular. The helical transmembrane segment at 79 to 99 (FWVFQIVVISTPSVMYLGYAV) threads the bilayer. Topologically, residues 100–223 (HRLARASEQE…AQLVVRAAFE (124 aa)) are cytoplasmic. The interval 108–199 (QERRRALRRR…TPGPAGQHDG (92 aa)) is disordered. The segment covering 112–124 (RALRRRPGTRRLP) has biased composition (basic residues). Positions 136–149 (PDTTDLGEAEPILA) are enriched in low complexity. Residues 150-173 (LEEDEDEEPGAPEGPGEDTEEERA) show a composition bias toward acidic residues. A helical transmembrane segment spans residues 224–244 (VAFLVGQYLLYGFEVPPFFAC). The Extracellular portion of the chain corresponds to 245-264 (SRQPCPHVVDCFVSRPTEKT). The chain crosses the membrane as a helical span at residues 265–285 (VFLLVMYVVSCLCLLLNLCEM). Over 286–440 (AHLGLGSAQD…SRDGKATVWI (155 aa)) the chain is Cytoplasmic. Residues 369 to 440 (DRDSPPCAGL…SRDGKATVWI (72 aa)) are disordered. The residue at position 372 (S372) is a Phosphoserine. A compositionally biased stretch (low complexity) spans 388–401 (VGGLASGTGSATSG).

It belongs to the connexin family. Gamma-type subfamily. In terms of assembly, a connexon is composed of a hexamer of connexins. Interacts with TJP1. In terms of tissue distribution, mainly expressed by oligodendrocytes in the central nervous system (at protein level).

The protein resides in the cell membrane. It localises to the cell junction. Its subcellular location is the gap junction. In terms of biological role, one gap junction consists of a cluster of closely packed pairs of transmembrane channels, the connexons, through which materials of low MW diffuse from one cell to a neighboring cell. May play a role in myelination in central and peripheral nervous systems. The chain is Gap junction gamma-2 protein (Gjc2) from Mus musculus (Mouse).